A 250-amino-acid chain; its full sequence is Ditrans,polycis-undecaprenyl-diphosphate synthase ((2E,6E)-farnesyl-diphosphate specific) (250 aa).

D27 is an active-site residue. Position 27 (D27) interacts with Mg(2+). Substrate contacts are provided by residues 28-31 (GNGR), W32, R40, H44, and 72-74 (SSE). Residue N75 is the Proton acceptor of the active site. The substrate site is built by W76, R78, and R195. H200 provides a ligand contact to Mg(2+). Substrate is bound at residue 201 to 203 (RIS). Residue E214 coordinates Mg(2+).

The protein belongs to the UPP synthase family. Homodimer. Requires Mg(2+) as cofactor.

It carries out the reaction 8 isopentenyl diphosphate + (2E,6E)-farnesyl diphosphate = di-trans,octa-cis-undecaprenyl diphosphate + 8 diphosphate. In terms of biological role, catalyzes the sequential condensation of isopentenyl diphosphate (IPP) with (2E,6E)-farnesyl diphosphate (E,E-FPP) to yield (2Z,6Z,10Z,14Z,18Z,22Z,26Z,30Z,34E,38E)-undecaprenyl diphosphate (di-trans,octa-cis-UPP). UPP is the precursor of glycosyl carrier lipid in the biosynthesis of bacterial cell wall polysaccharide components such as peptidoglycan and lipopolysaccharide. This is Ditrans,polycis-undecaprenyl-diphosphate synthase ((2E,6E)-farnesyl-diphosphate specific) from Blochmanniella floridana.